Here is a 386-residue protein sequence, read N- to C-terminus: D-amino-acid oxidase (386 aa).

9 residues coordinate FAD: glycine 14, glycine 15, valine 16, valine 17, glutamate 39, arginine 40, alanine 51, glycine 52, and glycine 53. The interval 109–138 (SSSPPHPLLPPWVDPSASAAPPRELGTPDT) is disordered. A compositionally biased stretch (pro residues) spans 112-121 (PPHPLLPPWV). The FAD site is built by arginine 174, valine 175, and alanine 176. Residues tyrosine 253, tyrosine 261, and lysine 332 each coordinate D-serine. D-proline-binding residues include tyrosine 261 and lysine 332. Residues lysine 332, glycine 344, isoleucine 345, glycine 362, and alanine 364 each coordinate FAD. Lysine 332 provides a ligand contact to D-dopa. Residue glycine 362 participates in D-serine binding. Glycine 362 provides a ligand contact to D-proline. Glycine 362 serves as a coordination point for D-dopa.

Belongs to the DAMOX/DASOX family.

It carries out the reaction a D-alpha-amino acid + O2 + H2O = a 2-oxocarboxylate + H2O2 + NH4(+). The catalysed reaction is D-alanine + O2 + H2O = pyruvate + H2O2 + NH4(+). The enzyme catalyses D-aspartate + O2 + H2O = oxaloacetate + H2O2 + NH4(+). Catalyzes the oxidative deamination of D-amino acids with broad substrate specificity. Enables the organism to utilize D-amino acids as a source of nutrients. In Zea mays (Maize), this protein is D-amino-acid oxidase.